Reading from the N-terminus, the 328-residue chain is tRNA uridine(34) hydroxylase (328 aa).

In terms of domain architecture, Rhodanese spans 130–224; the sequence is LDEDTVVLDT…YGKDPEVQGE (95 aa). The Cysteine persulfide intermediate role is filled by cysteine 184.

Belongs to the TrhO family.

It carries out the reaction uridine(34) in tRNA + AH2 + O2 = 5-hydroxyuridine(34) in tRNA + A + H2O. In terms of biological role, catalyzes oxygen-dependent 5-hydroxyuridine (ho5U) modification at position 34 in tRNAs. This is tRNA uridine(34) hydroxylase from Streptococcus pyogenes serotype M49 (strain NZ131).